The primary structure comprises 496 residues: uncharacterized protein (496 aa).

Mg(2+) contacts are provided by aspartate 36, aspartate 81, glutamate 300, glutamate 302, aspartate 321, aspartate 323, and aspartate 375.

This sequence belongs to the XPG/RAD2 endonuclease family. FEN1 subfamily. Mg(2+) serves as cofactor.

This is an uncharacterized protein from Schizosaccharomyces pombe (strain 972 / ATCC 24843) (Fission yeast).